The following is a 472-amino-acid chain: 3-isopropylmalate dehydratase large subunit (472 aa).

Residues C353, C414, and C417 each contribute to the [4Fe-4S] cluster site.

The protein belongs to the aconitase/IPM isomerase family. LeuC type 1 subfamily. As to quaternary structure, heterodimer of LeuC and LeuD. [4Fe-4S] cluster serves as cofactor.

The enzyme catalyses (2R,3S)-3-isopropylmalate = (2S)-2-isopropylmalate. The protein operates within amino-acid biosynthesis; L-leucine biosynthesis; L-leucine from 3-methyl-2-oxobutanoate: step 2/4. In terms of biological role, catalyzes the isomerization between 2-isopropylmalate and 3-isopropylmalate, via the formation of 2-isopropylmaleate. The polypeptide is 3-isopropylmalate dehydratase large subunit (Acinetobacter baumannii (strain ACICU)).